The following is a 139-amino-acid chain: Classical arabinogalactan protein 3 (139 aa).

Positions 1–21 (MALKTLQALIFLGLFAASCLA) are cleaved as a signal peptide. A Pyrrolidone carboxylic acid modification is found at glutamine 22. Residues 30-115 (TFLPPVESPS…PAPRADGPVA (86 aa)) are disordered. 2 stretches are compositionally biased toward pro residues: residues 46-77 (AEPP…PPTT) and 97-107 (PSGPTPAPAPA). Aspartate 116 carries GPI-anchor amidated aspartate lipidation. Residues 117–139 (SALTNKAFLVSTVIAGALYAVLA) constitute a propeptide, removed in mature form.

This sequence belongs to the classical AGP family. O-glycosylated on the hydroxyproline residues. In terms of tissue distribution, expressed at a low level in roots.

It is found in the cell membrane. Functionally, proteoglycan that seems to be implicated in diverse developmental roles such as differentiation, cell-cell recognition, embryogenesis and programmed cell death. This is Classical arabinogalactan protein 3 (AGP3) from Arabidopsis thaliana (Mouse-ear cress).